The following is a 321-amino-acid chain: Cytochrome c biogenesis protein CcsA (321 aa).

8 helical membrane-spanning segments follow: residues I9–L29, G44–G64, L71–L91, L98–S118, M143–I163, I225–N245, W260–F280, and V288–I308.

Belongs to the CcmF/CycK/Ccl1/NrfE/CcsA family. As to quaternary structure, may interact with Ccs1.

Its subcellular location is the plastid. It localises to the chloroplast thylakoid membrane. Functionally, required during biogenesis of c-type cytochromes (cytochrome c6 and cytochrome f) at the step of heme attachment. The sequence is that of Cytochrome c biogenesis protein CcsA from Dioscorea elephantipes (Elephant's foot yam).